Reading from the N-terminus, the 435-residue chain is Histidinol dehydrogenase (435 aa).

Residues Tyr131, Gln189, and Asn212 each coordinate NAD(+). Substrate is bound by residues Ser238, Gln260, and His263. 2 residues coordinate Zn(2+): Gln260 and His263. Residues Glu327 and His328 each act as proton acceptor in the active site. His328, Asp361, Glu415, and His420 together coordinate substrate. Zn(2+) is bound at residue Asp361. Position 420 (His420) interacts with Zn(2+).

The protein belongs to the histidinol dehydrogenase family. As to quaternary structure, homodimer. Zn(2+) serves as cofactor.

The catalysed reaction is L-histidinol + 2 NAD(+) + H2O = L-histidine + 2 NADH + 3 H(+). It participates in amino-acid biosynthesis; L-histidine biosynthesis; L-histidine from 5-phospho-alpha-D-ribose 1-diphosphate: step 9/9. Catalyzes the sequential NAD-dependent oxidations of L-histidinol to L-histidinaldehyde and then to L-histidine. The protein is Histidinol dehydrogenase (hisD) of Buchnera aphidicola subsp. Acyrthosiphon pisum (strain APS) (Acyrthosiphon pisum symbiotic bacterium).